The primary structure comprises 68 residues: DNA-directed RNA polymerase subunit omega (68 aa).

It belongs to the RNA polymerase subunit omega family. As to quaternary structure, the RNAP catalytic core consists of 2 alpha, 1 beta, 1 beta' and 1 omega subunit. When a sigma factor is associated with the core the holoenzyme is formed, which can initiate transcription.

It carries out the reaction RNA(n) + a ribonucleoside 5'-triphosphate = RNA(n+1) + diphosphate. Functionally, promotes RNA polymerase assembly. Latches the N- and C-terminal regions of the beta' subunit thereby facilitating its interaction with the beta and alpha subunits. The polypeptide is DNA-directed RNA polymerase subunit omega (Trichlorobacter lovleyi (strain ATCC BAA-1151 / DSM 17278 / SZ) (Geobacter lovleyi)).